Consider the following 313-residue polypeptide: Transcription factor MafB (313 aa).

Disordered regions lie at residues 51–77 (QPTG…FSPT) and 151–197 (MGLP…VEDR). The span at 55–76 (SVSSTPISTPCSSVPSSPSFSP) shows a compositional bias: low complexity. Basic residues predominate over residues 154–166 (PHHHPHHHQHQHH). The span at 167–192 (QTSPSPSGSSSSSQQLHHQQQHSSSS) shows a compositional bias: low complexity. The interval 225–250 (RLKQKRRTLKNRGYAQSCRYKRVQQK) is basic motif. Positions 225–288 (RLKQKRRTLK…DAYKIKCEKL (64 aa)) constitute a bZIP domain. The interval 253-274 (LEGEKTQLVQQVEQLKQEVSRL) is leucine-zipper. The disordered stretch occupies residues 292-313 (NSSNFREAGSTSDNPSSPEFFM).

Belongs to the bZIP family. Maf subfamily. As to quaternary structure, homodimer or heterodimer with other bHLH-Zip transcription factors. Binds DNA as a homodimer or a heterodimer.

The protein resides in the nucleus. Its function is as follows. Acts as a transcriptional activator or repressor. Implicated in the regulation of cell-type specific gene expression and play a role in inductive events during lens development. This Xenopus laevis (African clawed frog) protein is Transcription factor MafB (mafb).